Reading from the N-terminus, the 798-residue chain is Penicillin-binding protein 1A (798 aa).

Topologically, residues 2–9 are cytoplasmic; sequence IKKILTTC. The chain crosses the membrane as a helical; Signal-anchor for type II membrane protein span at residues 10 to 30; it reads FGLFFGFCVFGVGLVAIAILV. At 31-798 the chain is on the periplasmic side; it reads TYPKLPSLDS…SKQQQLDSLF (768 aa). The interval 50–218 is transglycosylase; the sequence is LTIYSADGEV…SAYNPIVNPE (169 aa). The active-site Proton donor; for transglycosylase activity is E88. The transpeptidase stretch occupies residues 378–700; sequence RRALGFAARA…GTIAVPVWVD (323 aa). S461 serves as the catalytic Acyl-ester intermediate; for transpeptidase activity. The disordered stretch occupies residues 739-798; it reads LMLDNSGIAPQPSRRAKEDDEAAVENEQQGRSDETRQDVQETPVLPSNTDSKQQQLDSLF. Residues 766 to 777 show a composition bias toward basic and acidic residues; it reads QQGRSDETRQDV. Over residues 783–798 the composition is skewed to polar residues; that stretch reads LPSNTDSKQQQLDSLF.

The protein in the N-terminal section; belongs to the glycosyltransferase 51 family. In the C-terminal section; belongs to the transpeptidase family.

The protein localises to the cell inner membrane. It carries out the reaction [GlcNAc-(1-&gt;4)-Mur2Ac(oyl-L-Ala-gamma-D-Glu-L-Lys-D-Ala-D-Ala)](n)-di-trans,octa-cis-undecaprenyl diphosphate + beta-D-GlcNAc-(1-&gt;4)-Mur2Ac(oyl-L-Ala-gamma-D-Glu-L-Lys-D-Ala-D-Ala)-di-trans,octa-cis-undecaprenyl diphosphate = [GlcNAc-(1-&gt;4)-Mur2Ac(oyl-L-Ala-gamma-D-Glu-L-Lys-D-Ala-D-Ala)](n+1)-di-trans,octa-cis-undecaprenyl diphosphate + di-trans,octa-cis-undecaprenyl diphosphate + H(+). The catalysed reaction is Preferential cleavage: (Ac)2-L-Lys-D-Ala-|-D-Ala. Also transpeptidation of peptidyl-alanyl moieties that are N-acyl substituents of D-alanine.. It functions in the pathway cell wall biogenesis; peptidoglycan biosynthesis. Cell wall formation. Synthesis of cross-linked peptidoglycan from the lipid intermediates. The enzyme has a penicillin-insensitive transglycosylase N-terminal domain (formation of linear glycan strands) and a penicillin-sensitive transpeptidase C-terminal domain (cross-linking of the peptide subunits). Essential for cell wall synthesis. In Neisseria gonorrhoeae (strain ATCC 700825 / FA 1090), this protein is Penicillin-binding protein 1A (mrcA).